Consider the following 60-residue polypeptide: Cytotoxin 2 (60 aa).

Cystine bridges form between cysteine 3–cysteine 21, cysteine 14–cysteine 38, cysteine 42–cysteine 53, and cysteine 54–cysteine 59.

This sequence belongs to the three-finger toxin family. Short-chain subfamily. Type IA cytotoxin sub-subfamily. Monomer in solution; Homodimer and oligomer in the presence of negatively charged lipids forming a pore with a size ranging between 20 and 30 Angstroms. As to expression, expressed by the venom gland.

It is found in the secreted. The protein localises to the target cell membrane. Shows cytolytic activity on many different cells by forming pore in lipid membranes. In vivo, increases heart rate or kills the animal by cardiac arrest. In addition, it binds to heparin with high affinity, interacts with Kv channel-interacting protein 1 (KCNIP1) in a calcium-independent manner, and binds to integrin alpha-V/beta-3 (ITGAV/ITGB3) with moderate affinity. The polypeptide is Cytotoxin 2 (Naja nivea (Cape cobra)).